Here is a 674-residue protein sequence, read N- to C-terminus: Protein tesmin/TSO1-like CXC 2 (674 aa).

Composition is skewed to polar residues over residues 1 to 16 (MDTP…TPIS) and 76 to 89 (THNS…NSVE). Disordered regions lie at residues 1–20 (MDTP…KSRF) and 69–113 (KESR…GLNI). Residues 95–109 (STSHEEVPAEGEDTK) are compositionally biased toward basic and acidic residues. The CRC domain maps to 373-498 (SCKRCNCKKS…RCEGCKNAFG (126 aa)). Disordered regions lie at residues 504–529 (SIDM…SQQN) and 623–655 (IPNI…RRNG). Over residues 507-516 (MEAEQEEENE) the composition is skewed to acidic residues.

Belongs to the lin-54 family. Ubiquitous but expressed mostly in all the aerial organs with highest expression in flowers.

The protein resides in the nucleus. In terms of biological role, plays a role in development of both male and female reproductive tissues. This chain is Protein tesmin/TSO1-like CXC 2 (TCX2), found in Arabidopsis thaliana (Mouse-ear cress).